The following is an 89-amino-acid chain: Insulin (89 aa).

3 disulfides stabilise this stretch: C7–C75, C19–C88, and C74–C79. The propeptide at 33-66 (DVGPLSAFRDLEPPLDTEMEDRFPYRQQLAGSKM) is c peptide.

This sequence belongs to the insulin family. In terms of assembly, heterodimer of a B chain and an A chain linked by two disulfide bonds.

The protein localises to the secreted. Its function is as follows. Insulin decreases blood glucose concentration. It increases cell permeability to monosaccharides, amino acids and fatty acids. It accelerates glycolysis, the pentose phosphate cycle, and glycogen synthesis in liver. The polypeptide is Insulin (ins) (Callorhinchus milii (Ghost shark)).